The chain runs to 562 residues: Membrane protein insertase YidC (562 aa).

Residues 1–21 (MDIKRTILIVALAIVTYVGVL) traverse the membrane as a helical segment. The segment at 42–74 (TAPGIPDTAAGNNGSASADVPSATGNTTSAAPL) is disordered. Helical transmembrane passes span 343 to 363 (LELT…FWLL), 369 to 389 (ILGN…GLFF), 439 to 459 (LGGC…YWVL), 470 to 490 (WILW…PIIM), and 517 to 537 (PIIF…YWVV).

Belongs to the OXA1/ALB3/YidC family. Type 1 subfamily. Interacts with the Sec translocase complex via SecD. Specifically interacts with transmembrane segments of nascent integral membrane proteins during membrane integration.

It is found in the cell inner membrane. In terms of biological role, required for the insertion and/or proper folding and/or complex formation of integral membrane proteins into the membrane. Involved in integration of membrane proteins that insert both dependently and independently of the Sec translocase complex, as well as at least some lipoproteins. Aids folding of multispanning membrane proteins. This Pseudomonas syringae pv. tomato (strain ATCC BAA-871 / DC3000) protein is Membrane protein insertase YidC.